We begin with the raw amino-acid sequence, 187 residues long: Large ribosomal subunit protein bL25 (187 aa).

It belongs to the bacterial ribosomal protein bL25 family. CTC subfamily. Part of the 50S ribosomal subunit; part of the 5S rRNA/L5/L18/L25 subcomplex. Contacts the 5S rRNA. Binds to the 5S rRNA independently of L5 and L18.

This is one of the proteins that binds to the 5S RNA in the ribosome where it forms part of the central protuberance. This chain is Large ribosomal subunit protein bL25, found in Tropheryma whipplei (strain TW08/27) (Whipple's bacillus).